The following is a 341-amino-acid chain: MAAPDSRLPNIALAGPTAAGKTAAALALAAALGRRQAVEIISVDSALVYRGMDIGSAKPTPAERAAVPHHLIDIRDPLQAYSAAEFVQDARRLIGEIRARGALPLLVGGTMLYFKALFDGLDAMPAADPAVRARLNARAAEQGWPALHTELARVDPVTAARLAPGDSQRIQRALEVWQISGQPLSSFHAIEKGAAGAYGACACALFSLEPQDRAWLHERIARRFDAMLAAGFIAEVQALRARGDLHPDLPAMRCVGYRQVWEALDWQARHAGGPPLHGAPLHARGMDAVRERGVAATRQLAKRQITWLRSMPQRHTTACDQPQAVAQLVQAVLQRLEQHAP.

ATP is bound at residue Gly15 to Thr22. Thr17 to Thr22 provides a ligand contact to substrate. 4 interaction with substrate tRNA regions span residues Asp44 to Leu47, Gln168 to Arg172, Arg253 to Arg258, and Lys302 to Arg309.

Belongs to the IPP transferase family. In terms of assembly, monomer. Requires Mg(2+) as cofactor.

The catalysed reaction is adenosine(37) in tRNA + dimethylallyl diphosphate = N(6)-dimethylallyladenosine(37) in tRNA + diphosphate. Its function is as follows. Catalyzes the transfer of a dimethylallyl group onto the adenine at position 37 in tRNAs that read codons beginning with uridine, leading to the formation of N6-(dimethylallyl)adenosine (i(6)A). This Verminephrobacter eiseniae (strain EF01-2) protein is tRNA dimethylallyltransferase.